Reading from the N-terminus, the 81-residue chain is MSAKGQLLQDPFLNTLRKEHIPVSIYLVNGIKLQGHIDSFDQYVVLLKNTVTQMVYKHAISTVVPARAVNIPFEAPPISDA.

One can recognise a Sm domain in the interval 10–69 (DPFLNTLRKEHIPVSIYLVNGIKLQGHIDSFDQYVVLLKNTVTQMVYKHAISTVVPARAV).

This sequence belongs to the Hfq family. In terms of assembly, homohexamer.

RNA chaperone that binds small regulatory RNA (sRNAs) and mRNAs to facilitate mRNA translational regulation in response to envelope stress, environmental stress and changes in metabolite concentrations. Also binds with high specificity to tRNAs. The protein is RNA-binding protein Hfq of Nitrosospira multiformis (strain ATCC 25196 / NCIMB 11849 / C 71).